Here is a 211-residue protein sequence, read N- to C-terminus: Small ribosomal subunit protein uS3 (211 aa).

A KH type-2 domain is found at 16-85; that stretch reads IDEYFKTKLV…NPQIEVKQVE (70 aa).

The protein belongs to the universal ribosomal protein uS3 family. Part of the 30S ribosomal subunit.

Functionally, binds the lower part of the 30S subunit head. This Methanococcus maripaludis (strain C7 / ATCC BAA-1331) protein is Small ribosomal subunit protein uS3.